Here is a 658-residue protein sequence, read N- to C-terminus: Threonine--tRNA ligase (658 aa).

The region spanning 1–64 (MSNTVSLQFP…GASGKVEIIT (64 aa)) is the TGS domain. Residues 246-548 (DHRRLGREMD…LIENFAGHMP (303 aa)) are catalytic. Zn(2+)-binding residues include cysteine 343, histidine 394, and histidine 525.

It belongs to the class-II aminoacyl-tRNA synthetase family. As to quaternary structure, homodimer. Zn(2+) serves as cofactor.

It localises to the cytoplasm. The enzyme catalyses tRNA(Thr) + L-threonine + ATP = L-threonyl-tRNA(Thr) + AMP + diphosphate + H(+). Its function is as follows. Catalyzes the attachment of threonine to tRNA(Thr) in a two-step reaction: L-threonine is first activated by ATP to form Thr-AMP and then transferred to the acceptor end of tRNA(Thr). Also edits incorrectly charged L-seryl-tRNA(Thr). The polypeptide is Threonine--tRNA ligase (Brucella melitensis biotype 2 (strain ATCC 23457)).